Reading from the N-terminus, the 340-residue chain is Holliday junction branch migration complex subunit RuvB (340 aa).

The large ATPase domain (RuvB-L) stretch occupies residues 4–184 (TDRIVGGQSL…FGIVQRLEFY (181 aa)). ATP contacts are provided by residues arginine 24, glycine 65, lysine 68, threonine 69, threonine 70, 131–133 (EDF), arginine 174, tyrosine 184, and arginine 221. Threonine 69 is a Mg(2+) binding site. A small ATPAse domain (RuvB-S) region spans residues 185–255 (SIEELAQIVT…IADLALNLLE (71 aa)). Positions 258 to 340 (PLGLDKMDRR…TMPERNLEDE (83 aa)) are head domain (RuvB-H). DNA-binding residues include arginine 294, arginine 313, and arginine 318.

Belongs to the RuvB family. Homohexamer. Forms an RuvA(8)-RuvB(12)-Holliday junction (HJ) complex. HJ DNA is sandwiched between 2 RuvA tetramers; dsDNA enters through RuvA and exits via RuvB. An RuvB hexamer assembles on each DNA strand where it exits the tetramer. Each RuvB hexamer is contacted by two RuvA subunits (via domain III) on 2 adjacent RuvB subunits; this complex drives branch migration. In the full resolvosome a probable DNA-RuvA(4)-RuvB(12)-RuvC(2) complex forms which resolves the HJ.

It localises to the cytoplasm. The enzyme catalyses ATP + H2O = ADP + phosphate + H(+). In terms of biological role, the RuvA-RuvB-RuvC complex processes Holliday junction (HJ) DNA during genetic recombination and DNA repair, while the RuvA-RuvB complex plays an important role in the rescue of blocked DNA replication forks via replication fork reversal (RFR). RuvA specifically binds to HJ cruciform DNA, conferring on it an open structure. The RuvB hexamer acts as an ATP-dependent pump, pulling dsDNA into and through the RuvAB complex. RuvB forms 2 homohexamers on either side of HJ DNA bound by 1 or 2 RuvA tetramers; 4 subunits per hexamer contact DNA at a time. Coordinated motions by a converter formed by DNA-disengaged RuvB subunits stimulates ATP hydrolysis and nucleotide exchange. Immobilization of the converter enables RuvB to convert the ATP-contained energy into a lever motion, pulling 2 nucleotides of DNA out of the RuvA tetramer per ATP hydrolyzed, thus driving DNA branch migration. The RuvB motors rotate together with the DNA substrate, which together with the progressing nucleotide cycle form the mechanistic basis for DNA recombination by continuous HJ branch migration. Branch migration allows RuvC to scan DNA until it finds its consensus sequence, where it cleaves and resolves cruciform DNA. The polypeptide is Holliday junction branch migration complex subunit RuvB (Hydrogenovibrio crunogenus (strain DSM 25203 / XCL-2) (Thiomicrospira crunogena)).